Here is a 102-residue protein sequence, read N- to C-terminus: Iron-sulfur cluster assembly protein CyaY (102 aa).

The protein belongs to the frataxin family.

Its function is as follows. Involved in iron-sulfur (Fe-S) cluster assembly. May act as a regulator of Fe-S biogenesis. The polypeptide is Iron-sulfur cluster assembly protein CyaY (Actinobacillus succinogenes (strain ATCC 55618 / DSM 22257 / CCUG 43843 / 130Z)).